Reading from the N-terminus, the 111-residue chain is Ig kappa chain V-III region PC 2880/PC 1229 (111 aa).

The framework-1 stretch occupies residues 1 to 23 (DIVLTQSPASLAVSLGQRATISC). A disulfide bridge connects residues C23 and C92. The interval 24–38 (RASESVDNYGISFMN) is complementarity-determining-1. Residues 39 to 53 (WFQQKPGQPPKLLIY) form a framework-2 region. Residues 54-60 (AASNQGS) form a complementarity-determining-2 region. The tract at residues 61-92 (GVPARFSGSGSGTDFSLNIHPMEEDDTAMYFC) is framework-3. Residues 93-101 (QQSKEVPWT) form a complementarity-determining-3 region. The interval 102-111 (FGGGTKLEIK) is framework-4.

The protein is Ig kappa chain V-III region PC 2880/PC 1229 of Mus musculus (Mouse).